The chain runs to 337 residues: Fructose-1,6-bisphosphatase class 1 (337 aa).

Positions 89, 112, 114, and 115 each coordinate Mg(2+). Substrate is bound by residues 115–118 (DGSS), asparagine 208, tyrosine 241, and lysine 271. Mg(2+) is bound at residue glutamate 277.

It belongs to the FBPase class 1 family. Homotetramer. It depends on Mg(2+) as a cofactor.

It localises to the cytoplasm. The catalysed reaction is beta-D-fructose 1,6-bisphosphate + H2O = beta-D-fructose 6-phosphate + phosphate. It functions in the pathway carbohydrate biosynthesis; gluconeogenesis. The protein is Fructose-1,6-bisphosphatase class 1 of Yersinia pseudotuberculosis serotype O:1b (strain IP 31758).